The chain runs to 127 residues: Holo-[acyl-carrier-protein] synthase (127 aa).

Mg(2+) is bound by residues Asp-8 and Glu-59.

The protein belongs to the P-Pant transferase superfamily. AcpS family. The cofactor is Mg(2+).

Its subcellular location is the cytoplasm. It carries out the reaction apo-[ACP] + CoA = holo-[ACP] + adenosine 3',5'-bisphosphate + H(+). Transfers the 4'-phosphopantetheine moiety from coenzyme A to a Ser of acyl-carrier-protein. The sequence is that of Holo-[acyl-carrier-protein] synthase from Rickettsia bellii (strain OSU 85-389).